A 201-amino-acid chain; its full sequence is Prostamide/prostaglandin F synthase (201 aa).

Position 108 is a phosphotyrosine (Y108).

Belongs to the peroxiredoxin-like PRXL2 family. Prostamide/prostaglandin F synthase subfamily.

The protein resides in the cytoplasm. Its subcellular location is the cytosol. The enzyme catalyses prostaglandin H2 + [thioredoxin]-dithiol = prostaglandin F2alpha + [thioredoxin]-disulfide. The catalysed reaction is prostamide F2alpha + [thioredoxin]-disulfide = prostamide H2 + [thioredoxin]-dithiol. Its function is as follows. Catalyzes the reduction of prostaglandin-ethanolamide H(2) (prostamide H(2)) to prostamide F(2alpha) with NADPH as proton donor. Also able to reduce prostaglandin H(2) to prostaglandin F(2alpha). This Bos taurus (Bovine) protein is Prostamide/prostaglandin F synthase (PRXL2B).